Here is a 347-residue protein sequence, read N- to C-terminus: Quinolinate synthase (347 aa).

Positions 47 and 68 each coordinate iminosuccinate. A [4Fe-4S] cluster-binding site is contributed by Cys113. Iminosuccinate contacts are provided by residues 139–141 and Ser156; that span reads YAN. Cys200 provides a ligand contact to [4Fe-4S] cluster. Residues 226–228 and Thr243 each bind iminosuccinate; that span reads HPE. Cys297 is a binding site for [4Fe-4S] cluster.

The protein belongs to the quinolinate synthase family. Type 1 subfamily. [4Fe-4S] cluster serves as cofactor.

The protein localises to the cytoplasm. The enzyme catalyses iminosuccinate + dihydroxyacetone phosphate = quinolinate + phosphate + 2 H2O + H(+). Its pathway is cofactor biosynthesis; NAD(+) biosynthesis; quinolinate from iminoaspartate: step 1/1. Catalyzes the condensation of iminoaspartate with dihydroxyacetone phosphate to form quinolinate. The protein is Quinolinate synthase of Escherichia coli O139:H28 (strain E24377A / ETEC).